The sequence spans 294 residues: DNA adenine methyltransferase YhdJ (294 aa).

Positions 275–294 are disordered; it reads TGNLSKRSRLSEVDPDLITK. The segment covering 283-294 has biased composition (basic and acidic residues); that stretch reads RLSEVDPDLITK.

This sequence belongs to the N(4)/N(6)-methyltransferase family.

The catalysed reaction is a 2'-deoxyadenosine in DNA + S-adenosyl-L-methionine = an N(6)-methyl-2'-deoxyadenosine in DNA + S-adenosyl-L-homocysteine + H(+). Its function is as follows. A beta subtype methylase, recognizes the double-stranded sequence 5'-ATGCAT-3' and methylates A-5. This chain is DNA adenine methyltransferase YhdJ (yhdJ), found in Escherichia coli (strain K12).